Consider the following 470-residue polypeptide: 3-isopropylmalate dehydratase large subunit (470 aa).

[4Fe-4S] cluster-binding residues include C348, C409, and C412.

It belongs to the aconitase/IPM isomerase family. LeuC type 1 subfamily. Heterodimer of LeuC and LeuD. [4Fe-4S] cluster serves as cofactor.

The catalysed reaction is (2R,3S)-3-isopropylmalate = (2S)-2-isopropylmalate. It functions in the pathway amino-acid biosynthesis; L-leucine biosynthesis; L-leucine from 3-methyl-2-oxobutanoate: step 2/4. Its function is as follows. Catalyzes the isomerization between 2-isopropylmalate and 3-isopropylmalate, via the formation of 2-isopropylmaleate. The polypeptide is 3-isopropylmalate dehydratase large subunit (Thioalkalivibrio sulfidiphilus (strain HL-EbGR7)).